The sequence spans 99 residues: Putative protein tag-209 (99 aa).

The first 16 residues, Met1–Ser16, serve as a signal peptide directing secretion.

In Caenorhabditis elegans, this protein is Putative protein tag-209 (tag-209).